The following is a 565-amino-acid chain: Carboxylesterase 1D (565 aa).

Positions 1–18 are cleaved as a signal peptide; the sequence is MGLYPLIWLSLAACTAWG. The N-linked (GlcNAc...) asparagine glycan is linked to Asn79. Residues Cys87 and Cys116 are joined by a disulfide bond. The active-site Acyl-ester intermediate is Ser221. An intrachain disulfide couples Cys273 to Cys284. The Charge relay system role is filled by Glu353. Lys382 is modified (N6-succinyllysine). His466 acts as the Charge relay system in catalysis. N-linked (GlcNAc...) asparagine glycosylation occurs at Asn489. The Prevents secretion from ER motif lies at 562–565; it reads HVEL.

Belongs to the type-B carboxylesterase/lipase family. Homotrimer. In terms of tissue distribution, highest expression occurs in liver with lower levels in adipose tissue, kidney, heart, intestine, lung, testis and thymus.

The protein resides in the endoplasmic reticulum lumen. Its subcellular location is the cytoplasm. It localises to the cytosol. It is found in the lipid droplet. The protein localises to the microsome. It carries out the reaction a carboxylic ester + H2O = an alcohol + a carboxylate + H(+). It catalyses the reaction a long-chain fatty acyl ethyl ester + H2O = a long-chain fatty acid + ethanol + H(+). The catalysed reaction is all-trans-retinyl hexadecanoate + H2O = all-trans-retinol + hexadecanoate + H(+). Major lipase in white adipose tissue. Involved in the metabolism of xenobiotics and of natural substrates. Hydrolyzes triacylglycerols and monoacylglycerols, with a preference for monoacylglycerols. The susceptibility of the substrate increases with decreasing acyl chain length of the fatty acid moiety. Catalyzes the synthesis of fatty acid ethyl esters. Hydrolyzes retinyl esters. This chain is Carboxylesterase 1D, found in Mus musculus (Mouse).